The sequence spans 319 residues: Phospho-N-acetylmuramoyl-pentapeptide-transferase (319 aa).

A run of 10 helical transmembrane segments spans residues 1–21 (MSILVAGLTLVSAFLITFLLM), 53–73 (TMGGLLFILSAALTCGWVGAW), 77–97 (LNGTLGALLFTLIAYGLIGMW), 117–137 (FLAQVVGAMVFAVIYQHEGFQ), 140–160 (FGLTDWGWFYALFIIFWMVGF), 172–192 (GLVTGLATISFAAYLVLALVQ), 195–215 (TEVALFCLAMIGTLLGFFPFN), 221–241 (IFMGDMGSLALGASLAAVALV), 249–269 (LIIGIVYVLETLSVILQVAYF), and 298–318 (GVFWLVGLIAGALTVATILFL).

Belongs to the glycosyltransferase 4 family. MraY subfamily. Mg(2+) is required as a cofactor.

It localises to the cell membrane. It carries out the reaction UDP-N-acetyl-alpha-D-muramoyl-L-alanyl-gamma-D-glutamyl-L-lysyl-D-alanyl-D-alanine + di-trans,octa-cis-undecaprenyl phosphate = Mur2Ac(oyl-L-Ala-gamma-D-Glu-L-Lys-D-Ala-D-Ala)-di-trans,octa-cis-undecaprenyl diphosphate + UMP. Its pathway is cell wall biogenesis; peptidoglycan biosynthesis. Functionally, catalyzes the initial step of the lipid cycle reactions in the biosynthesis of the cell wall peptidoglycan: transfers peptidoglycan precursor phospho-MurNAc-pentapeptide from UDP-MurNAc-pentapeptide onto the lipid carrier undecaprenyl phosphate, yielding undecaprenyl-pyrophosphoryl-MurNAc-pentapeptide, known as lipid I. The polypeptide is Phospho-N-acetylmuramoyl-pentapeptide-transferase (Limosilactobacillus fermentum (strain NBRC 3956 / LMG 18251) (Lactobacillus fermentum)).